A 331-amino-acid chain; its full sequence is Ferrochelatase (331 aa).

Fe cation contacts are provided by histidine 187 and glutamate 286.

It belongs to the ferrochelatase family.

It is found in the cytoplasm. The enzyme catalyses heme b + 2 H(+) = protoporphyrin IX + Fe(2+). It participates in porphyrin-containing compound metabolism; protoheme biosynthesis; protoheme from protoporphyrin-IX: step 1/1. Catalyzes the ferrous insertion into protoporphyrin IX. The protein is Ferrochelatase of Legionella pneumophila subsp. pneumophila (strain Philadelphia 1 / ATCC 33152 / DSM 7513).